The primary structure comprises 165 residues: Ribonuclease H2 subunit C (165 aa).

Position 1 is an N-acetylmethionine (Met-1).

This sequence belongs to the RNase H2 subunit C family. The RNase H2 complex is a heterotrimer composed of the catalytic subunit RNASEH2A and the non-catalytic subunits RNASEH2B and RNASEH2C.

It is found in the nucleus. Its function is as follows. Non catalytic subunit of RNase H2, an endonuclease that specifically degrades the RNA of RNA:DNA hybrids. Participates in DNA replication, possibly by mediating the removal of lagging-strand Okazaki fragment RNA primers during DNA replication. Mediates the excision of single ribonucleotides from DNA:RNA duplexes. The protein is Ribonuclease H2 subunit C (RNASEH2C) of Bos taurus (Bovine).